A 536-amino-acid polypeptide reads, in one-letter code: Chaperonin GroEL (536 aa).

Residues 30-33 (TLGP), 86-90 (DGTTT), Gly-414, and Asp-494 contribute to the ATP site.

The protein belongs to the chaperonin (HSP60) family. Forms a cylinder of 14 subunits composed of two heptameric rings stacked back-to-back. Interacts with the co-chaperonin GroES.

The protein resides in the cytoplasm. The enzyme catalyses ATP + H2O + a folded polypeptide = ADP + phosphate + an unfolded polypeptide.. Its function is as follows. Together with its co-chaperonin GroES, plays an essential role in assisting protein folding. The GroEL-GroES system forms a nano-cage that allows encapsulation of the non-native substrate proteins and provides a physical environment optimized to promote and accelerate protein folding. The chain is Chaperonin GroEL from Methanospirillum hungatei JF-1 (strain ATCC 27890 / DSM 864 / NBRC 100397 / JF-1).